A 1087-amino-acid chain; its full sequence is Exportin-7 (1087 aa).

Alanine 2 carries the N-acetylalanine modification. An Importin N-terminal domain is found at 30-96 (AEKALVEFTN…RNYVLNYLAT (67 aa)). Serine 570 is subject to Phosphoserine.

It belongs to the exportin family. Binds to nucleoporins. Found in a complex with XPO7, EIF4A1, ARHGAP1, VPS26A, VPS29, VPS35 and SFN. Interacts with ARHGAP1 and SFN. Interacts with Ran and cargo proteins in a GTP-dependent manner. In terms of tissue distribution, highly expressed in testis and spleen, moderate in kidney and liver and low in heart, brain, lung and skeletal muscle.

The protein localises to the cytoplasm. The protein resides in the nucleus. Mediates the nuclear export of proteins (cargos) with broad substrate specificity. In the nucleus binds cooperatively to its cargo and to the GTPase Ran in its active GTP-bound form. Docking of this trimeric complex to the nuclear pore complex (NPC) is mediated through binding to nucleoporins. Upon transit of a nuclear export complex into the cytoplasm, disassembling of the complex and hydrolysis of Ran-GTP to Ran-GDP (induced by RANBP1 and RANGAP1, respectively) cause release of the cargo from the export receptor. XPO7 then return to the nuclear compartment and mediate another round of transport. The directionality of nuclear export is thought to be conferred by an asymmetric distribution of the GTP- and GDP-bound forms of Ran between the cytoplasm and nucleus. The sequence is that of Exportin-7 (Xpo7) from Mus musculus (Mouse).